Consider the following 428-residue polypeptide: MSNKIQAIRGMNDLLPEQSPVWQYFERQIQHLMQRYGYNEIRTPILEQTALFKRSIGEVTDIVEKEMYTFEDRNGDSLTLRPEGTASCVRAALENGLLYNQTQRLWYQGPMFRHERPQKGRYRQFHQVGVEAYGMLGPDIDFEMILLSARLWDALGLMPHVRLELNSLGSSEARAAYRDALVAYFEAHAEVLDEDSRRRLTSNPLRILDSKNPDMAEMLEAAPRLMDHLDDESRAHFEQLTAMLDAAGIDYVINPRLVRGLDYYSRTVFEWTTQALGSQGTVCAGGRYDGLVEQLGGKPTPGVGFAMGVERLILLLETLDLVPEAARSRPDVYLTAMGDTASREAMLLGEHLRDALPEMHLQVHCGGGSFKSQIKKADKSGARIALMLGDDEIASGSVGIKFLREDREQESVAREALAARLQALLAED.

Belongs to the class-II aminoacyl-tRNA synthetase family. As to quaternary structure, homodimer.

The protein localises to the cytoplasm. It catalyses the reaction tRNA(His) + L-histidine + ATP = L-histidyl-tRNA(His) + AMP + diphosphate + H(+). The chain is Histidine--tRNA ligase from Chromohalobacter salexigens (strain ATCC BAA-138 / DSM 3043 / CIP 106854 / NCIMB 13768 / 1H11).